The primary structure comprises 64 residues: Large ribosomal subunit protein bL35 (64 aa).

It belongs to the bacterial ribosomal protein bL35 family.

This chain is Large ribosomal subunit protein bL35, found in Shewanella putrefaciens (strain CN-32 / ATCC BAA-453).